The primary structure comprises 263 residues: Proteasome subunit alpha type-1 (263 aa).

M1 bears the N-acetylmethionine mark. Phosphoserine; alternate is present on S110. The O-linked (GlcNAc) serine; alternate glycan is linked to S110. A Glycyl lysine isopeptide (Lys-Gly) (interchain with G-Cter in ubiquitin) cross-link involves residue K115. S177 carries the post-translational modification Phosphoserine. A Glycyl lysine isopeptide (Lys-Gly) (interchain with G-Cter in ubiquitin) cross-link involves residue K208. Positions 232–263 (FLEGLEERPQRKAQPAQPADEPAEKADEPMEH) are disordered. Positions 253–263 (PAEKADEPMEH) are enriched in basic and acidic residues.

It belongs to the peptidase T1A family. As to quaternary structure, the 26S proteasome consists of a 20S proteasome core and two 19S regulatory subunits. The 20S proteasome core is a barrel-shaped complex made of 28 subunits that are arranged in four stacked rings. The two outer rings are each formed by seven alpha subunits, and the two inner rings are formed by seven beta subunits. The proteolytic activity is exerted by three beta-subunits PSMB5, PSMB6 and PSMB7. Interacts with NOTCH3. Interacts with ZFAND1.

It is found in the cytoplasm. Its subcellular location is the nucleus. Its function is as follows. Component of the 20S core proteasome complex involved in the proteolytic degradation of most intracellular proteins. This complex plays numerous essential roles within the cell by associating with different regulatory particles. Associated with two 19S regulatory particles, forms the 26S proteasome and thus participates in the ATP-dependent degradation of ubiquitinated proteins. The 26S proteasome plays a key role in the maintenance of protein homeostasis by removing misfolded or damaged proteins that could impair cellular functions, and by removing proteins whose functions are no longer required. Associated with the PA200 or PA28, the 20S proteasome mediates ubiquitin-independent protein degradation. This type of proteolysis is required in several pathways including spermatogenesis (20S-PA200 complex) or generation of a subset of MHC class I-presented antigenic peptides (20S-PA28 complex). This is Proteasome subunit alpha type-1 (PSMA1) from Macaca fascicularis (Crab-eating macaque).